We begin with the raw amino-acid sequence, 911 residues long: Transferrin-binding protein A (911 aa).

Residues 1-24 form the signal peptide; sequence MQQQHLFRLNILCLSLMTALPAYA. Positions 38–45 match the TonB box motif; the sequence is DTIQVKAK. One can recognise a TBDR plug domain in the interval 51–176; it reads RDNEVTGLGK…LAGSVAFQTK (126 aa). The TBDR beta-barrel domain occupies 187-911; the sequence is QWGIQSKTAY…NYTFSLEMKF (725 aa). The short motif at 894 to 911 is the TonB C-terminal box element; the sequence is NRYAAPGRNYTFSLEMKF.

It belongs to the TonB-dependent receptor family. Binds both human apo- and holo-transferrin (TF), via the TF C-terminus. Forms a large complex with TF and TbpB.

The protein resides in the cell outer membrane. Neisseria acquires iron by extracting it from serum transferrin (TF) in its human host. Acts as a TF receptor and is required for TF utilization. Binds both apo- and holo-TF, via the TF C-terminus. In Neisseria meningitidis serogroup B, this protein is Transferrin-binding protein A.